We begin with the raw amino-acid sequence, 961 residues long: Alanine--tRNA ligase, chloroplastic/mitochondrial (961 aa).

Zn(2+) contacts are provided by histidine 641, histidine 645, cysteine 743, and histidine 747.

The protein belongs to the class-II aminoacyl-tRNA synthetase family. Monomer. The cofactor is Zn(2+).

It is found in the plastid. The protein resides in the chloroplast. It localises to the mitochondrion. The catalysed reaction is tRNA(Ala) + L-alanine + ATP = L-alanyl-tRNA(Ala) + AMP + diphosphate. Its function is as follows. Catalyzes the attachment of alanine to tRNA(Ala) in a two-step reaction: alanine is first activated by ATP to form Ala-AMP and then transferred to the acceptor end of tRNA(Ala). Also edits incorrectly charged tRNA(Ala) via its editing domain. This is Alanine--tRNA ligase, chloroplastic/mitochondrial from Sorghum bicolor (Sorghum).